We begin with the raw amino-acid sequence, 298 residues long: Protein BZR1 homolog 1 (298 aa).

4 disordered regions span residues 1-25 (MTSG…RRER), 71-129 (GTTY…SPSR), 153-175 (VSSS…PKIR), and 190-217 (AVSA…ESDV). The tract at residues 10–91 (RTPTWKEREN…PSSAGGASVG (82 aa)) is required for DNA-binding. Low complexity predominate over residues 96–128 (SSTQLLSAPSSSFPSPVPSYHASPASSSFPSPS). Serine 156 is modified (phosphoserine). The interval 204 to 224 (EHPDTIPECDESDVSTVDSGR) is PEST-like.

This sequence belongs to the BZR/LAT61 family. As to quaternary structure, interacts with GF14C. Interacts with PUB24. Interacts with SMOS1. In terms of processing, phosphorylated on serine and threonine residues by GSK2. Dephosphorylated during response to brassinosteroid. Ubiquitinated by PUB24. Ubiquitination leads to its subsequent degradation by the 26S proteasome, thus reducing sensitivity to brassinosteroid signaling.

It localises to the nucleus. It is found in the cytoplasm. Its function is as follows. Positive brassinosteroid-signaling protein. Mediates downstream brassinosteroid-regulated growth response and feedback inhibition of brassinosteroid (BR) biosynthetic genes. May act as transcriptional repressor by binding the brassinosteroid-response element (BREE) (5'-CGTG(T/C)G-3') in the promoter of DLT (AC Q9LWU9), another positive regulator of BR signaling. Acts as a transcriptional repressor of LIC, a negative regulator of BR signaling, by binding to the BRRE element of its promoter. BZR1 and LIC play opposite roles in BR signaling and regulation of leaf bending. The polypeptide is Protein BZR1 homolog 1 (Oryza sativa subsp. japonica (Rice)).